The sequence spans 588 residues: Probable cytochrome c oxidase subunit 1-beta (588 aa).

Residues 1 to 26 are disordered; it reads MTATPAQRRPALPATRPYPARHGPKG. Residues 43–63 traverse the membrane as a helical segment; the sequence is VLYLVSATGFFLIGGLLALLM. Residue His87 participates in Fe(II)-heme a binding. The next 6 membrane-spanning stretches (helical) occupy residues 90 to 110, 128 to 148, 171 to 191, 214 to 234, 259 to 279, and 291 to 311; these read IMLL…VLPL, WLYL…GGAA, LWIL…VNMI, ILIT…ALMA, LFWF…FGII, and IFGY…SMAV. 2 residues coordinate Cu cation: His265 and Tyr269. The segment at residues 265–269 is a cross-link (1'-histidyl-3'-tyrosine (His-Tyr)); that stretch reads HPEVY. Positions 314 and 315 each coordinate Cu cation. The next 2 membrane-spanning stretches (helical) occupy residues 320-340 and 360-380; these read GAVL…PTGV and MLFA…GVIL. His398 serves as a coordination point for heme a3. 3 consecutive transmembrane segments (helical) span residues 399 to 419, 434 to 454, and 477 to 497; these read FHYV…YFWF, LHFW…HWLG, and VSTI…WNGF. Residue His400 coordinates Fe(II)-heme a. The segment at 557–588 is disordered; the sequence is AEAHAGRRAGHGAGAELSVPSTVATKDDDHTS.

The protein belongs to the heme-copper respiratory oxidase family. Associates with subunits II, III and IV to form cytochrome c oxidase. It depends on Cu(2+) as a cofactor. The cofactor is heme.

The protein localises to the cell membrane. It catalyses the reaction 4 Fe(II)-[cytochrome c] + O2 + 8 H(+)(in) = 4 Fe(III)-[cytochrome c] + 2 H2O + 4 H(+)(out). It participates in energy metabolism; oxidative phosphorylation. Cytochrome c oxidase is the component of the respiratory chain that catalyzes the reduction of oxygen to water. Subunits 1-3 form the functional core of the enzyme complex. CO I is the catalytic subunit of the enzyme. Electrons originating in cytochrome c are transferred via the copper A center of subunit 2 and heme A of subunit 1 to the bimetallic center formed by heme A3 and copper B. The protein is Probable cytochrome c oxidase subunit 1-beta (ctaD2) of Nocardia farcinica (strain IFM 10152).